We begin with the raw amino-acid sequence, 495 residues long: uncharacterized protein (495 aa).

The segment covering 305 to 317 has biased composition (low complexity); it reads DYNNNNNENYSGS. A disordered region spans residues 305-404; that stretch reads DYNNNNNENY…LDEEDNRKNK (100 aa). The segment covering 335 to 347 has biased composition (acidic residues); sequence YDNDENNDDENND. Low complexity predominate over residues 348-363; it reads ENNNNNNNNNNNNNNN. Over residues 386–398 the composition is skewed to acidic residues; sequence SDDDEADNELDEE.

This is an uncharacterized protein from Dictyostelium discoideum (Social amoeba).